Reading from the N-terminus, the 421-residue chain is Solute carrier family 35 member F3 (421 aa).

Positions Glu-25–Arg-53 are disordered. A compositionally biased stretch (low complexity) spans Ala-37–Gly-49. 10 helical membrane passes run Val-66–Leu-86, Phe-98–Gly-118, Val-149–Leu-169, Asp-179–Leu-199, Ile-208–His-228, Val-232–Phe-252, Leu-266–Leu-286, Leu-305–Val-325, Thr-326–Asp-346, and Ile-352–Leu-372. The tract at residues Lys-394–Arg-421 is disordered. The span at Arg-411–Arg-421 shows a compositional bias: basic residues.

This sequence belongs to the SLC35F solute transporter family.

It is found in the membrane. It carries out the reaction thiamine(in) = thiamine(out). Mediates thiamine transport. This chain is Solute carrier family 35 member F3 (Slc35f3), found in Mus musculus (Mouse).